The primary structure comprises 201 residues: 3-isopropylmalate dehydratase small subunit (201 aa).

Belongs to the LeuD family. LeuD type 1 subfamily. In terms of assembly, heterodimer of LeuC and LeuD.

It catalyses the reaction (2R,3S)-3-isopropylmalate = (2S)-2-isopropylmalate. It participates in amino-acid biosynthesis; L-leucine biosynthesis; L-leucine from 3-methyl-2-oxobutanoate: step 2/4. Functionally, catalyzes the isomerization between 2-isopropylmalate and 3-isopropylmalate, via the formation of 2-isopropylmaleate. This is 3-isopropylmalate dehydratase small subunit from Shewanella pealeana (strain ATCC 700345 / ANG-SQ1).